Here is a 511-residue protein sequence, read N- to C-terminus: Centrosomal protein CCDC61 (511 aa).

The head domain stretch occupies residues 1 to 144; it reads MEVGTVVQEE…PLPLPYLGKP (144 aa). Residues 147–272 are a coiled coil; sequence AELQKEIRAL…RVKSLTTELA (126 aa). Disordered stretches follow at residues 306–403 and 447–486; these read TRVG…SREP and RGRK…SMDT. Residues 315 to 335 show a composition bias toward basic and acidic residues; it reads GSRERIEDRGRRSEERVRRAD. Residues 338–352 are compositionally biased toward polar residues; sequence GSRNCITRPSPSPTG. Residues 366-378 show a composition bias toward basic and acidic residues; the sequence is DRQRRQKEAELKS.

This sequence belongs to the CCDC61 family. Forms homodimers (via head domain).

The protein localises to the cytoplasm. It is found in the cytoskeleton. Its subcellular location is the microtubule organizing center. It localises to the centrosome. The protein resides in the centriolar satellite. The protein localises to the cilium basal body. Microtubule-binding centrosomal protein required for centriole cohesion, independently of the centrosome-associated protein/CEP250 and rootletin/CROCC linker. In interphase, required for anchoring microtubule at the mother centriole subdistal appendages and for centrosome positioning. During mitosis, may be involved in spindle assembly and chromatin alignment by regulating the organization of spindle microtubules into a symmetrical structure. Plays a non-essential role in ciliogenesis. In Danio rerio (Zebrafish), this protein is Centrosomal protein CCDC61.